The following is a 440-amino-acid chain: Ribosomal protein uS12 methylthiotransferase RimO (440 aa).

Residues 5 to 115 (PTVGFVSLGC…VVNAVHEVVP (111 aa)) enclose the MTTase N-terminal domain. The [4Fe-4S] cluster site is built by Cys14, Cys50, Cys79, Cys148, Cys152, and Cys155. A Radical SAM core domain is found at 134-372 (LTPRHYAYLK…MAHQQAISAA (239 aa)). The region spanning 375–440 (QLKVGKELDV…DEYDLWAEVI (66 aa)) is the TRAM domain.

It belongs to the methylthiotransferase family. RimO subfamily. Requires [4Fe-4S] cluster as cofactor.

It localises to the cytoplasm. It carries out the reaction L-aspartate(89)-[ribosomal protein uS12]-hydrogen + (sulfur carrier)-SH + AH2 + 2 S-adenosyl-L-methionine = 3-methylsulfanyl-L-aspartate(89)-[ribosomal protein uS12]-hydrogen + (sulfur carrier)-H + 5'-deoxyadenosine + L-methionine + A + S-adenosyl-L-homocysteine + 2 H(+). Its function is as follows. Catalyzes the methylthiolation of an aspartic acid residue of ribosomal protein uS12. The polypeptide is Ribosomal protein uS12 methylthiotransferase RimO (Stutzerimonas stutzeri (strain A1501) (Pseudomonas stutzeri)).